A 605-amino-acid chain; its full sequence is Capsid scaffolding protein (605 aa).

Residues His-48, Ser-116, and His-139 each act as charge relay system in the active site. The disordered stretch occupies residues Ala-235–Gly-275. The interval Gln-281–Asp-300 is interaction with pAP. Disordered stretches follow at residues Asp-403–Asp-432 and Pro-489–Ser-588. The short motif at Arg-410–Arg-416 is the Nuclear localization signal element. Polar residues predominate over residues Ala-568–Pro-579. The segment at Lys-585 to Ala-605 is interaction with major capsid protein.

The protein belongs to the herpesviridae capsid scaffolding protein family. In terms of assembly, homomultimer. Interacts with major capsid protein. Exists in a monomer-dimer equilibrium with the dimer being the active species. In terms of processing, capsid scaffolding protein is cleaved by assemblin after formation of the spherical procapsid. As a result, the capsid obtains its mature, icosahedral shape. Cleavages occur at two or more sites: release (R-site) and maturation (M-site).

The protein resides in the host cytoplasm. It localises to the host nucleus. It carries out the reaction Cleaves -Ala-|-Ser- and -Ala-|-Ala- bonds in the scaffold protein.. In terms of biological role, acts as a scaffold protein by binding major capsid protein in the cytoplasm, inducing the nuclear localization of both proteins. Multimerizes in the nucleus such as major capsid protein forms the icosahedral T=16 capsid. Autocatalytic cleavage releases the assembly protein, and subsequently abolishes interaction with major capsid protein. Cleavages products are evicted from the capsid before or during DNA packaging. Functionally, protease that plays an essential role in virion assembly within the nucleus. Catalyzes the cleavage of the assembly protein after formation of the spherical procapsid. By that cleavage, the capsid matures and gains its icosahedral shape. The cleavage sites seem to include -Ala-Ser-, -Ala-Ala-, as well as Ala-Thr bonds. Assemblin and cleavages products are evicted from the capsid before or during DNA packaging. Plays a major role in capsid assembly. Acts as a scaffold protein by binding major capsid protein. Multimerizes in the nucleus such as major capsid protein forms the icosahedral T=16 capsid. Cleaved by assemblin after capsid completion. The cleavages products are evicted from the capsid before or during DNA packaging. In Epstein-Barr virus (strain AG876) (HHV-4), this protein is Capsid scaffolding protein.